Here is an 811-residue protein sequence, read N- to C-terminus: MEAARALRLLLVVCGCLALPPLAEPVCPERCDCQHPQHLLCTNRGLRVVPKTSSLPSPHDVLTYSLGGNFITNITAFDFHRLGQLRRLDLQYNQIRSLHPKTFEKLSRLEELYLGNNLLQALAPGTLAPLRKLRILYANGNEISRLSRGSFEGLESLVKLRLDGNALGALPDAVFAPLGNLLYLHLESNRIRFLGKNAFAQLGKLRFLNLSANELQPSLRHAATFAPLRSLSSLILSANNLQHLGPRIFQHLPRLGLLSLRGNQLTHLAPEAFWGLEALRELRLEGNRLSQLPTALLEPLHSLEALDLSGNELSALHPATFGHLGRLRELSLRNNALSALSGDIFAASPALYRLDLDGNGWTCDCRLRGLKRWMGDWHSQGRLLTVFVQCRHPPALRGKYLDYLDDQQLQNGSCADPSPSASLTADRRRQPLPTAAGEEMTPPAGLAEELPPQPQLQQQGRFLAGVAWDGAARELVGNRSALRLSRRGPGLQQPSPSVAAAAGPAPQSLDLHKKPQRGRPTRADPALAEPTPTASPGSAPSPAGDPWQRATKHRLGTEHQERAAQSDGGAGLPPLVSDPCDFNKFILCNLTVEAVGADSASVRWAVREHRSPRPLGGARFRLLFDRFGQQPKFHRFVYLPESSDSATLRELRGDTPYLVCVEGVLGGRVCPVAPRDHCAGLVTLPEAGSRGGVDYQLLTLALLTVNALLVLLALAAWASRWLRRKLRARRKGGAPVHVRHMYSTRRPLRSMGTGVSADFSGFQSHRPRTTVCALSEADLIEFPCDRFMDSAGGGAGGSLRREDRLLQRFAD.

The N-terminal stretch at 1-25 is a signal peptide; it reads MEAARALRLLLVVCGCLALPPLAEP. An LRRNT domain is found at 26–57; that stretch reads VCPERCDCQHPQHLLCTNRGLRVVPKTSSLPS. The Extracellular portion of the chain corresponds to 26–696; it reads VCPERCDCQH…AGSRGGVDYQ (671 aa). LRR repeat units follow at residues 61-81, 84-105, 108-129, 132-153, 156-177, 180-201, 204-223, 230-251, 254-275, 278-299, 302-323, and 326-347; these read VLTYSLGGNFITNITAFDFHR, QLRRLDLQYNQIRSLHPKTFEK, RLEELYLGNNLLQALAPGTLAP, KLRILYANGNEISRLSRGSFEG, SLVKLRLDGNALGALPDAVFAP, NLLYLHLESNRIRFLGKNAFAQ, KLRFLNLSANELQPSLRHAA, SLSSLILSANNLQHLGPRIFQH, RLGLLSLRGNQLTHLAPEAFWG, ALRELRLEGNRLSQLPTALLEP, SLEALDLSGNELSALHPATFGH, and RLRELSLRNNALSALSGDIFAA. N-linked (GlcNAc...) asparagine glycosylation occurs at asparagine 73. Asparagine 209 is a glycosylation site (N-linked (GlcNAc...) asparagine). An LRRCT domain is found at 359–416; it reads NGWTCDCRLRGLKRWMGDWHSQGRLLTVFVQCRHPPALRGKYLDYLDDQQLQNGSCAD. A disordered region spans residues 484–549; sequence LSRRGPGLQQ…PSPAGDPWQR (66 aa). 2 stretches are compositionally biased toward low complexity: residues 492 to 508 and 530 to 544; these read QQPSPSVAAAAGPAPQS and PTPTASPGSAPSPAG. Asparagine 589 carries an N-linked (GlcNAc...) asparagine glycan. Residues 697–717 form a helical membrane-spanning segment; the sequence is LLTLALLTVNALLVLLALAAW. Topologically, residues 718–811 are cytoplasmic; the sequence is ASRWLRRKLR…EDRLLQRFAD (94 aa). Serine 798 is modified (phosphoserine).

In terms of assembly, belongs to the lipopolysaccharide (LPS) receptor, a multi-protein complex containing at least CD14, MD-2 and TLR4. Interacts with TLR4; this interaction is greatly enhanced by LPS stimulation. Interacts with LPS. N-glycolysaled. As to expression, highly expressed in the brain, ovary, small intestine and spleen.

It is found in the membrane. Component of the TLR4 signaling complex. Mediates the innate immune response to bacterial lipopolysaccharide (LPS) leading to cytokine secretion. This is TLR4 interactor with leucine rich repeats (TRIL) from Homo sapiens (Human).